Consider the following 229-residue polypeptide: Large ribosomal subunit protein uL1 (229 aa).

The protein belongs to the universal ribosomal protein uL1 family. As to quaternary structure, part of the 50S ribosomal subunit.

In terms of biological role, binds directly to 23S rRNA. The L1 stalk is quite mobile in the ribosome, and is involved in E site tRNA release. Its function is as follows. Protein L1 is also a translational repressor protein, it controls the translation of the L11 operon by binding to its mRNA. The sequence is that of Large ribosomal subunit protein uL1 from Streptococcus agalactiae serotype Ia (strain ATCC 27591 / A909 / CDC SS700).